The sequence spans 419 residues: Imidazolonepropionase (419 aa).

Fe(3+)-binding residues include His87 and His89. The Zn(2+) site is built by His87 and His89. Residues Arg96, Tyr159, and His192 each contribute to the 4-imidazolone-5-propanoate site. N-formimidoyl-L-glutamate is bound at residue Tyr159. His257 contacts Fe(3+). Position 257 (His257) interacts with Zn(2+). 4-imidazolone-5-propanoate is bound at residue Gln260. Fe(3+) is bound at residue Asp332. Residue Asp332 coordinates Zn(2+). N-formimidoyl-L-glutamate is bound by residues Asn334 and Gly336. Ser337 contacts 4-imidazolone-5-propanoate.

It belongs to the metallo-dependent hydrolases superfamily. HutI family. Requires Zn(2+) as cofactor. Fe(3+) serves as cofactor.

It is found in the cytoplasm. It carries out the reaction 4-imidazolone-5-propanoate + H2O = N-formimidoyl-L-glutamate. Its pathway is amino-acid degradation; L-histidine degradation into L-glutamate; N-formimidoyl-L-glutamate from L-histidine: step 3/3. Functionally, catalyzes the hydrolytic cleavage of the carbon-nitrogen bond in imidazolone-5-propanoate to yield N-formimidoyl-L-glutamate. It is the third step in the universal histidine degradation pathway. This is Imidazolonepropionase from Alteromonas mediterranea (strain DSM 17117 / CIP 110805 / LMG 28347 / Deep ecotype).